Reading from the N-terminus, the 159-residue chain is UPF0587 protein v1g245604 (159 aa).

4 residues coordinate Zn(2+): C33, C36, C67, and C70.

This sequence belongs to the UPF0587 family.

The protein is UPF0587 protein v1g245604 of Nematostella vectensis (Starlet sea anemone).